The primary structure comprises 433 residues: MSADVRDILDMERANTPEVTRDSFLATKKRNFERTKTASRRPEGMHREVFALLYTDKKDAPPLLPTDTALGIGAGYKETKARLGMKKVRKWEWAPFSNPARNDSAVFHHWKRVTDNSTDYPFAKFNKQLEVPSYTMTEYNAHLRNNINNWSKVQTDHLFDLARRFDLRFIVMADRWNRQQHGTKTVEELKERYYEVVALLAKAKNQTSEKKVFVYDVEHERRRKEQLEKLFKRTTQQVEEENMLINEMKKIEARKKERERKTQDLQKLISQADQQNEHASNTPSTRKYEKKLHKKKVHQQPRPSRVDSVVNAIEIGSSGIKFADLRGSGVSLRSQRMKLPANIGQRKVKALEQAIQEFKVDPAPPPTEDICTSFNELRSDMVLLCELRTALSTCVYEMESLKHQYEAACPGKTLNIPPSLVPIKTEALDNSTN.

A required for nuclear localization region spans residues 1–204; it reads MSADVRDILD…EVVALLAKAK (204 aa). Residues 148-197 enclose the Myb-like domain; that stretch reads NNWSKVQTDHLFDLARRFDLRFIVMADRWNRQQHGTKTVEELKERYYEVV. Residues 186–281 are a coiled coil; the sequence is VEELKERYYE…ADQQNEHASN (96 aa). Basic and acidic residues predominate over residues 252 to 264; the sequence is EARKKERERKTQD. A disordered region spans residues 252–305; the sequence is EARKKERERKTQDLQKLISQADQQNEHASNTPSTRKYEKKLHKKKVHQQPRPSR. The segment covering 268 to 285 has biased composition (polar residues); sequence LISQADQQNEHASNTPST. A compositionally biased stretch (basic residues) spans 288–299; it reads YEKKLHKKKVHQ.

Interacts with Rel. Interacts with akirin and Bap55.

The protein localises to the nucleus. The protein resides in the cytoplasm. In terms of biological role, involved in transcription repression and activation. Required for larvae and pupal development, and for normal innate immune responses. Involved in modulating the activation of the immune deficiency pathway (Imd), acting either downstream of, or at the level of, the NF-kappa-B factor Rel. Possibly functions with akirin to regulate Rel, and its interaction with the Brahma complex protein Bap55 suggests that it may regulate the IMD pathway at the level of chromatin remodeling. In Drosophila melanogaster (Fruit fly), this protein is DNA methyltransferase 1-associated protein 1.